Consider the following 397-residue polypeptide: DNA replication and repair protein RecF (397 aa).

Gly-30–Thr-37 provides a ligand contact to ATP.

It belongs to the RecF family.

It is found in the cytoplasm. Functionally, the RecF protein is involved in DNA metabolism; it is required for DNA replication and normal SOS inducibility. RecF binds preferentially to single-stranded, linear DNA. It also seems to bind ATP. This Beutenbergia cavernae (strain ATCC BAA-8 / DSM 12333 / CCUG 43141 / JCM 11478 / NBRC 16432 / NCIMB 13614 / HKI 0122) protein is DNA replication and repair protein RecF.